Here is a 222-residue protein sequence, read N- to C-terminus: Large ribosomal subunit protein mL64 (222 aa).

Disordered stretches follow at residues 21 to 47 and 186 to 222; these read RSRS…NLLT and QRKR…EPSS. Positions 98–207 form a coiled coil; it reads TMQESLRLQQ…KKEARIAAMA (110 aa). The Nuclear localization signal signature appears at 184 to 200; it reads KQQRKRLKEERQRQKKE. A compositionally biased stretch (basic and acidic residues) spans 186–202; sequence QRKRLKEERQRQKKEAR. Residues 203-215 show a composition bias toward low complexity; that stretch reads IAAMASAEAQDSA.

Belongs to the mitochondrion-specific ribosomal protein mL64 family. Component of the mitochondrial ribosome large subunit (39S) which comprises a 16S rRNA and about 50 distinct proteins. Interacts with GADD45A, GADD45B and GADD45G. Interacts with NR4A1 via the NR4A1 AB domain. Interacts with ATAD3A and ATAD3B.

It localises to the mitochondrion. The protein resides in the nucleus. Functionally, acts as a negative regulator of G1 to S cell cycle phase progression by inhibiting cyclin-dependent kinases. Inhibitory effects are additive with GADD45 proteins but also occur in the absence of GADD45 proteins. Acts as a repressor of the orphan nuclear receptor NR4A1 by inhibiting AB domain-mediated transcriptional activity. May be involved in the hormone-mediated regulation of NR4A1 transcriptional activity. May play a role in mitochondrial protein synthesis. The protein is Large ribosomal subunit protein mL64 (Gadd45gip1) of Mus musculus (Mouse).